Consider the following 542-residue polypeptide: Thermosome subunit (542 aa).

Belongs to the TCP-1 chaperonin family. Forms an oligomeric complex of eight-membered rings.

Functionally, molecular chaperone; binds unfolded polypeptides in vitro, and has a weak ATPase activity. This chain is Thermosome subunit (ths), found in Methanocaldococcus jannaschii (strain ATCC 43067 / DSM 2661 / JAL-1 / JCM 10045 / NBRC 100440) (Methanococcus jannaschii).